Consider the following 94-residue polypeptide: FXYD domain-containing ion transport regulator 6 (94 aa).

An N-terminal signal peptide occupies residues 1–17 (METVLVLCSLLAPVVLA). Residues 18-34 (SAAEKEKEKDPFYYDYQ) lie on the Extracellular side of the membrane. A helical transmembrane segment spans residues 35 to 57 (TLRIGGLVFAVVLFSVGILLILS). Residues 58–94 (RRCKCSFNQKPRAPGDEEAQVENLITTNAAEPQKAEN) are Cytoplasmic-facing.

Belongs to the FXYD family. In terms of assembly, regulatory subunit of the sodium/potassium-transporting ATPase which is composed of a catalytic alpha subunit, a non-catalytic beta subunit and an additional regulatory subunit. The regulatory subunit, a member of the FXYD protein family, modulates the enzymatic activity in a tissue- and isoform-specific way by changing affinities of the Na+/K+-ATPase toward Na(+), K(+) or ATP.

It is found in the cell membrane. In terms of biological role, associates with and regulates the activity of the sodium/potassium-transporting ATPase (NKA) which catalyzes the hydrolysis of ATP coupled with the exchange of Na(+) and K(+) ions across the plasma membrane. Reduces the apparent affinity for intracellular Na(+) with no change in the apparent affinity for extracellular K(+). In addition to modulating NKA kinetics, may also function as a regulator of NKA localization to the plasma membrane. This Mus musculus (Mouse) protein is FXYD domain-containing ion transport regulator 6 (Fxyd6).